Reading from the N-terminus, the 160-residue chain is UPF0262 protein Mmar10_1128 (160 aa).

The protein belongs to the UPF0262 family.

The protein is UPF0262 protein Mmar10_1128 of Maricaulis maris (strain MCS10) (Caulobacter maris).